We begin with the raw amino-acid sequence, 796 residues long: Peroxisome proliferator-activated receptor gamma coactivator 1-alpha (796 aa).

Lys-77 carries the post-translational modification N6-acetyllysine. The tract at residues 98-138 is disordered; that stretch reads PVDEDGLPSFDALTDGDVTTENEASPSSMPDGTPPPQEAEE. The segment covering 114 to 127 has biased composition (polar residues); sequence DVTTENEASPSSMP. The short motif at 142 to 146 is the LXXLL motif element; sequence LKKLL. Lys-144 carries the N6-acetyllysine modification. Residue Thr-176 is modified to Phosphothreonine; by AMPK. At Lys-182 the chain carries N6-acetyllysine. A disordered region spans residues 211–274; that stretch reads YLTTNDDPPH…PNDPKGSPFE (64 aa). The segment covering 217–235 has biased composition (basic and acidic residues); the sequence is DPPHTKPTETRNSSRDKCT. Residues 242-258 are compositionally biased toward polar residues; the sequence is TQSQSQHLQAKPTSLSL. N6-acetyllysine is present on residues Lys-252, Lys-269, Lys-276, and Lys-319. The disordered stretch occupies residues 288 to 349; that stretch reads GTAGLTPPTT…NNSTKKGPEQ (62 aa). An interaction with PPARG region spans residues 291-337; that stretch reads GLTPPTTPPHKANQDNPFRASPKLKPPCKTVVPPPSKKTRYSESSGT. The segment covering 332–344 has biased composition (polar residues); the sequence is SESSGTHGNNSTK. N6-acetyllysine occurs at positions 345, 411, and 449. The tract at residues 348 to 796 is mediates interaction with RNF34; sequence EQSELYAQLS…LKEAQRSLRR (449 aa). Residues 463–487 are disordered; that stretch reads HFGHPSQAVFDDEADKTSELRDSDF. The segment covering 477-486 has biased composition (basic and acidic residues); sequence DKTSELRDSD. Residue Ser-537 is modified to Phosphoserine; by AMPK. Disordered regions lie at residues 541 to 637 and 648 to 667; these read FNSP…SYEE and YRRE…ERQR. A compositionally biased stretch (low complexity) spans 568–603; it reads RSFSQHRSCSRSPYSRSRSRSPGSRSSSRSCYYSES. Over residues 620 to 629 the composition is skewed to basic residues; the sequence is SRSRSPYSRR. The 77-residue stretch at 675-751 folds into the RRM domain; the sequence is RVIYVGKIRP…TDFELYFCGR (77 aa). An N6-acetyllysine mark is found at Lys-756 and Lys-777.

As to quaternary structure, homooligomer. Interacts with MYBBP1A; inhibits MYBBP1A transcriptional activation. Interacts with PRDM16, LPIN1 and PML. Interacts (via LXXLL motif) with RORA and RORC (via AF-2 motif); activates RORA and RORC transcriptional activation. Interacts with LRPPRC. Interacts with FOXO1. Interacts with NR5A2. Phosphorylation by AMPK in skeletal muscle increases activation of its own promoter. Phosphorylated by CLK2. In terms of processing, heavily acetylated by KAT2A/GCN5 under conditions of high nutrients, leading to inactivation of PPARGC1A. Deacetylated by SIRT1 in low nutrients/high NAD conditions, leading to its activation. Post-translationally, ubiquitinated. Ubiquitination by RNF34 induces proteasomal degradation.

It localises to the nucleus. It is found in the PML body. Transcriptional coactivator for steroid receptors and nuclear receptors. Greatly increases the transcriptional activity of PPARG and thyroid hormone receptor on the uncoupling protein promoter. Can regulate key mitochondrial genes that contribute to the program of adaptive thermogenesis. Plays an essential role in metabolic reprogramming in response to dietary availability through coordination of the expression of a wide array of genes involved in glucose and fatty acid metabolism. Acts as a key regulator of gluconeogenesis: stimulates hepatic gluconeogenesis by increasing the expression of gluconeogenic enzymes, and acting together with FOXO1 to promote the fasting gluconeogenic program. Induces the expression of PERM1 in the skeletal muscle in an ESRRA-dependent manner. Also involved in the integration of the circadian rhythms and energy metabolism. Required for oscillatory expression of clock genes, such as BMAL1 and NR1D1, through the coactivation of RORA and RORC, and metabolic genes, such as PDK4 and PEPCK. The polypeptide is Peroxisome proliferator-activated receptor gamma coactivator 1-alpha (PPARGC1A) (Sus scrofa (Pig)).